A 299-amino-acid polypeptide reads, in one-letter code: UDP-N-acetylenolpyruvoylglucosamine reductase (299 aa).

One can recognise an FAD-binding PCMH-type domain in the interval 27-192 (KSGGAADWLF…VGATFRGRPG (166 aa)). Residue arginine 172 is part of the active site. Positions 206–225 (ASREASQPLRSRTGGSTFKN) are disordered. The segment covering 208 to 224 (REASQPLRSRTGGSTFK) has biased composition (polar residues). Catalysis depends on serine 221, which acts as the Proton donor. Glutamate 291 is an active-site residue.

This sequence belongs to the MurB family. It depends on FAD as a cofactor.

The protein resides in the cytoplasm. It catalyses the reaction UDP-N-acetyl-alpha-D-muramate + NADP(+) = UDP-N-acetyl-3-O-(1-carboxyvinyl)-alpha-D-glucosamine + NADPH + H(+). It participates in cell wall biogenesis; peptidoglycan biosynthesis. Its function is as follows. Cell wall formation. The chain is UDP-N-acetylenolpyruvoylglucosamine reductase from Sphingopyxis alaskensis (strain DSM 13593 / LMG 18877 / RB2256) (Sphingomonas alaskensis).